A 107-amino-acid chain; its full sequence is Virulence factor PGA16 (107 aa).

The first 18 residues, 1 to 18, serve as a signal peptide directing secretion; the sequence is MRVFQIVYILIISNLIYA. The interval 26–56 is disordered; the sequence is SHHHKNDNNIADNTNNNNNNNNNNNNNNITN. The segment covering 33 to 56 has biased composition (low complexity); the sequence is NNIADNTNNNNNNNNNNNNNNITN. N-linked (GlcNAc...) asparagine glycosylation is found at N53 and N56. G76 carries GPI-anchor amidated glycine lipidation. The propeptide at 77 to 107 is removed in mature form; that stretch reads VAAMGGILGQNGWFYGDAGLMAAIFGAMLLL.

The protein resides in the cell membrane. In terms of biological role, cell surface GPI-anchored protein required for virulence. Mediates hyphal ramification which is important for the interaction with host cells. This Candida albicans (strain SC5314 / ATCC MYA-2876) (Yeast) protein is Virulence factor PGA16 (PGA16).